Here is a 277-residue protein sequence, read N- to C-terminus: Alpha carbonic anhydrase 5 (277 aa).

The first 22 residues, 1–22, serve as a signal peptide directing secretion; it reads MKIPSIGYVFFLIFISITIVSS. Residues 33 to 269 enclose the Alpha-carbonic anhydrase domain; it reads TQFNYEKKGE…KNERPVALYI (237 aa). A disulfide bridge connects residues Cys58 and Cys219. Asn91 is a glycosylation site (N-linked (GlcNAc...) asparagine). The active-site Proton acceptor is His99. N-linked (GlcNAc...) asparagine glycosylation is present at Asn117. Zn(2+) is bound by residues His127, His129, and His146. 215 to 216 is a substrate binding site; the sequence is TT.

This sequence belongs to the alpha-class carbonic anhydrase family. It depends on Zn(2+) as a cofactor. N-glycosylated.

Its subcellular location is the plastid. The protein localises to the chloroplast stroma. The enzyme catalyses hydrogencarbonate + H(+) = CO2 + H2O. Reversible hydration of carbon dioxide. The chain is Alpha carbonic anhydrase 5 (ACA5) from Arabidopsis thaliana (Mouse-ear cress).